The following is a 323-amino-acid chain: Ig gamma chain C region (323 aa).

3 consecutive Ig-like domains span residues 6–96 (PSVF…KTVA), 114–213 (PSVF…KTIS), and 222–318 (PKVY…KSIS).

The chain is Ig gamma chain C region from Oryctolagus cuniculus (Rabbit).